A 97-amino-acid chain; its full sequence is Co-chaperonin GroES (97 aa).

This sequence belongs to the GroES chaperonin family. Heptamer of 7 subunits arranged in a ring. Interacts with the chaperonin GroEL.

The protein resides in the cytoplasm. In terms of biological role, together with the chaperonin GroEL, plays an essential role in assisting protein folding. The GroEL-GroES system forms a nano-cage that allows encapsulation of the non-native substrate proteins and provides a physical environment optimized to promote and accelerate protein folding. GroES binds to the apical surface of the GroEL ring, thereby capping the opening of the GroEL channel. The sequence is that of Co-chaperonin GroES from Burkholderia vietnamiensis.